A 226-amino-acid chain; its full sequence is PKHD-type hydroxylase Daci_1172 (226 aa).

The region spanning 78–178 is the Fe2OG dioxygenase domain; the sequence is KVLPPRFNRY…RYASFFWTHS (101 aa). Positions 96, 98, and 159 each coordinate Fe cation. Position 169 (Arg-169) interacts with 2-oxoglutarate.

Fe(2+) is required as a cofactor. L-ascorbate serves as cofactor.

This Delftia acidovorans (strain DSM 14801 / SPH-1) protein is PKHD-type hydroxylase Daci_1172.